A 245-amino-acid polypeptide reads, in one-letter code: 1-(5-phosphoribosyl)-5-[(5-phosphoribosylamino)methylideneamino] imidazole-4-carboxamide isomerase (245 aa).

The active-site Proton acceptor is the Asp-8. Asp-129 serves as the catalytic Proton donor.

It belongs to the HisA/HisF family.

The protein localises to the cytoplasm. It carries out the reaction 1-(5-phospho-beta-D-ribosyl)-5-[(5-phospho-beta-D-ribosylamino)methylideneamino]imidazole-4-carboxamide = 5-[(5-phospho-1-deoxy-D-ribulos-1-ylimino)methylamino]-1-(5-phospho-beta-D-ribosyl)imidazole-4-carboxamide. It functions in the pathway amino-acid biosynthesis; L-histidine biosynthesis; L-histidine from 5-phospho-alpha-D-ribose 1-diphosphate: step 4/9. This Geotalea daltonii (strain DSM 22248 / JCM 15807 / FRC-32) (Geobacter daltonii) protein is 1-(5-phosphoribosyl)-5-[(5-phosphoribosylamino)methylideneamino] imidazole-4-carboxamide isomerase.